A 226-amino-acid chain; its full sequence is Uracil-DNA glycosylase (226 aa).

Asp64 acts as the Proton acceptor in catalysis.

The protein belongs to the uracil-DNA glycosylase (UDG) superfamily. UNG family.

The protein localises to the cytoplasm. The enzyme catalyses Hydrolyzes single-stranded DNA or mismatched double-stranded DNA and polynucleotides, releasing free uracil.. Its function is as follows. Excises uracil residues from the DNA which can arise as a result of misincorporation of dUMP residues by DNA polymerase or due to deamination of cytosine. This Vibrio campbellii (strain ATCC BAA-1116) protein is Uracil-DNA glycosylase.